Consider the following 372-residue polypeptide: uncharacterized protein (372 aa).

A signal peptide spans 1 to 19 (MKIFFLFIILLGIIQLSNS). Residue N18 is glycosylated (N-linked (GlcNAc...) asparagine). An MRH domain is found at 20–160 (SSCNIDIAGD…IWTTKYSCAI (141 aa)). An intrachain disulfide couples C22 to C58. N59 is a glycosylation site (N-linked (GlcNAc...) asparagine). Residues C128 and C158 are joined by a disulfide bond. Positions 185–282 (NEILNEAQSN…VQFNDDIKLI (98 aa)) form a coiled coil. Residues 201 to 233 (KNEDLNNNNNNNNNNNNNNNNNNNNNNNNNKIN) form a disordered region. A compositionally biased stretch (low complexity) spans 206–230 (NNNNNNNNNNNNNNNNNNNNNNNNN).

The protein resides in the secreted. This is an uncharacterized protein from Dictyostelium discoideum (Social amoeba).